A 200-amino-acid polypeptide reads, in one-letter code: Mediator of RNA polymerase II transcription subunit 22 (200 aa).

Residues 93-122 (SVNEAIDQRNQQLRALQEECDRKLITLRDE) adopt a coiled-coil conformation. The interval 169-200 (PLLASPETGAGPLQSAAPVHSHGGGPGPTEHT) is disordered. Residues 190 to 200 (HGGGPGPTEHT) are compositionally biased toward gly residues.

This sequence belongs to the Mediator complex subunit 22 family. As to quaternary structure, component of the Mediator complex, which is composed of MED1, MED4, MED6, MED7, MED8, MED9, MED10, MED11, MED12, MED13, MED13L, MED14, MED15, MED16, MED17, MED18, MED19, MED20, MED21, MED22, MED23, MED24, MED25, MED26, MED27, MED29, MED30, MED31, CCNC, CDK8 and CDC2L6/CDK11. The MED12, MED13, CCNC and CDK8 subunits form a distinct module termed the CDK8 module. Mediator containing the CDK8 module is less active than Mediator lacking this module in supporting transcriptional activation. Individual preparations of the Mediator complex lacking one or more distinct subunits have been variously termed ARC, CRSP, DRIP, PC2, SMCC and TRAP.

The protein resides in the nucleus. Component of the Mediator complex, a coactivator involved in the regulated transcription of nearly all RNA polymerase II-dependent genes. Mediator functions as a bridge to convey information from gene-specific regulatory proteins to the basal RNA polymerase II transcription machinery. Mediator is recruited to promoters by direct interactions with regulatory proteins and serves as a scaffold for the assembly of a functional preinitiation complex with RNA polymerase II and the general transcription factors. The sequence is that of Mediator of RNA polymerase II transcription subunit 22 (Med22) from Mus musculus (Mouse).